Here is a 107-residue protein sequence, read N- to C-terminus: UPF0145 protein YbjQ (107 aa).

Belongs to the UPF0145 family.

The chain is UPF0145 protein YbjQ from Salmonella dublin (strain CT_02021853).